The primary structure comprises 207 residues: MAFTEIKHPLIIDKLTRMRKTETSSKDFRENLNEIAQLMVYEIFRDLKLEPVEITTPVAKTTGYTINQPVVLVPILRAGIGMLDGIQKLIPTARIAHVGLYRDETTLEIHQYFAKTTKDIDKSYVIVVDPMLATGGSACKAIDIVKQWGAKEVKFVCLVAVEPGIKRLQEQHPDVEIYAASKDEKLNEKGYIIPGLGDAGDRIFGTK.

Residues arginine 77, arginine 102, and 129–137 (DPMLATGGS) contribute to the 5-phospho-alpha-D-ribose 1-diphosphate site. Uracil is bound by residues isoleucine 192 and 197-199 (GDA). Residue aspartate 198 participates in 5-phospho-alpha-D-ribose 1-diphosphate binding.

This sequence belongs to the UPRTase family. Mg(2+) serves as cofactor.

It carries out the reaction UMP + diphosphate = 5-phospho-alpha-D-ribose 1-diphosphate + uracil. Its pathway is pyrimidine metabolism; UMP biosynthesis via salvage pathway; UMP from uracil: step 1/1. Allosterically activated by GTP. Its function is as follows. Catalyzes the conversion of uracil and 5-phospho-alpha-D-ribose 1-diphosphate (PRPP) to UMP and diphosphate. The protein is Uracil phosphoribosyltransferase of Mycoplasma mycoides subsp. mycoides SC (strain CCUG 32753 / NCTC 10114 / PG1).